Reading from the N-terminus, the 378-residue chain is Probable 3-hydroxyisobutyryl-CoA hydrolase 2 (378 aa).

Positions 115, 138, and 146 each coordinate substrate. The Microbody targeting signal motif lies at 376–378; it reads AKL.

Belongs to the enoyl-CoA hydratase/isomerase family.

The protein resides in the peroxisome. The catalysed reaction is 3-hydroxy-2-methylpropanoyl-CoA + H2O = 3-hydroxy-2-methylpropanoate + CoA + H(+). Its pathway is amino-acid degradation; L-valine degradation. Its function is as follows. Involved in valine catabolism. In Arabidopsis thaliana (Mouse-ear cress), this protein is Probable 3-hydroxyisobutyryl-CoA hydrolase 2.